The following is a 349-amino-acid chain: UDP-3-O-acylglucosamine N-acyltransferase (349 aa).

Residue histidine 242 is the Proton acceptor of the active site.

The protein belongs to the transferase hexapeptide repeat family. LpxD subfamily. As to quaternary structure, homotrimer.

The catalysed reaction is a UDP-3-O-[(3R)-3-hydroxyacyl]-alpha-D-glucosamine + a (3R)-hydroxyacyl-[ACP] = a UDP-2-N,3-O-bis[(3R)-3-hydroxyacyl]-alpha-D-glucosamine + holo-[ACP] + H(+). Its pathway is bacterial outer membrane biogenesis; LPS lipid A biosynthesis. Its function is as follows. Catalyzes the N-acylation of UDP-3-O-acylglucosamine using 3-hydroxyacyl-ACP as the acyl donor. Is involved in the biosynthesis of lipid A, a phosphorylated glycolipid that anchors the lipopolysaccharide to the outer membrane of the cell. In Cytophaga hutchinsonii (strain ATCC 33406 / DSM 1761 / CIP 103989 / NBRC 15051 / NCIMB 9469 / D465), this protein is UDP-3-O-acylglucosamine N-acyltransferase.